Here is a 148-residue protein sequence, read N- to C-terminus: Secretory phospholipase A2 (148 aa).

The first 23 residues, 1 to 23 (MKLSVLLALGASSLAAAAPAATA), serve as a signal peptide directing secretion. The N-linked (GlcNAc...) asparagine glycan is linked to asparagine 61. The cysteines at positions 62 and 78 are disulfide-linked. Residue histidine 81 is part of the active site. A Ca(2+)-binding site is contributed by aspartate 82.

It belongs to the phospholipase A2 family. Requires Ca(2+) as cofactor.

It is found in the secreted. The enzyme catalyses a 1,2-diacyl-sn-glycero-3-phosphocholine + H2O = a 1-acyl-sn-glycero-3-phosphocholine + a fatty acid + H(+). In terms of biological role, secretory phospholipase that catalyzes the calcium-dependent hydrolysis of the 2-acyl groups in 3-sn-phosphoglycerides. Increases the ability to utilize host-derived nutrients and lipids, and promotes lipid dropplets accumulation. Plays a role in virulence. In Arthroderma benhamiae (strain ATCC MYA-4681 / CBS 112371) (Trichophyton mentagrophytes), this protein is Secretory phospholipase A2.